The sequence spans 354 residues: MTEYRNFLLLFITSLSVIYPCTGISWLGLTINGSSVGWNQTHHCKLLDGLVPDQQQLCKRNLELMHSIVRAARLTKSACTSSFSDMRWNWSSIESAPHFTPDLAKGTREAAFVVSLAAAVVSHAIARACASGDLPSCSCAAMPSEQAAPDFRWGGCGDNLRYYGLQMGSAFSDAPMRNRRSGPQDFRLMQLHNNAVGRQVLMDSLEMKCKCHGVSGSCSVKTCWKGLQDISTISADLKSKYLSATKVIPRQIGTRRQLVPREMEVRPVGENELVYLVSSPDYCTQNAKQGSLGTTDRQCNKTASGSESCGLMCCGRGYNAYTEVLVERCQCKYHWCCYVSCKTCKRTVERYVSK.

Positions 1-23 (MTEYRNFLLLFITSLSVIYPCTG) are cleaved as a signal peptide. N-linked (GlcNAc...) asparagine glycans are attached at residues Asn32, Asn39, and Asn89. 9 disulfides stabilise this stretch: Cys129–Cys137, Cys139–Cys156, Cys209–Cys223, Cys211–Cys218, Cys283–Cys314, Cys299–Cys309, Cys329–Cys344, Cys331–Cys341, and Cys336–Cys337. Ser215 is lipidated: O-palmitoleoyl serine; by PORCN. A glycan (N-linked (GlcNAc...) asparagine) is linked at Asn300.

Belongs to the Wnt family. In terms of processing, palmitoleoylation is required for efficient binding to frizzled receptors. Depalmitoleoylation leads to Wnt signaling pathway inhibition.

Its subcellular location is the secreted. It localises to the extracellular space. The protein localises to the extracellular matrix. Ligand for fzd5, a member of the G-protein coupled frizzled receptor family. Plays a role in early eye development, possibly through wnt non-canonical signaling. Promotes eye formation, at least partially, by antagonizing the Wnt/beta-catenin pathway. In addition, promotes coherence of eye field cells, potentially contributing to the coordinated morphogenetic behaviors of cells in the nascent eye field. This Danio rerio (Zebrafish) protein is Protein Wnt-11 (wnt11).